The sequence spans 353 residues: MFTLSDFDFDLPPELIAQTALPERSASRLLEVNGQTTPASFADRRFAELPECIQPGDLLVFNDTKVLKARFLGQKASGGKIEVLVERLTGERTALAQIRASKSPGPGTVLRLADAFDVTVGERVEPFYTLHFPDDCLTLIEQFGRLPLPPYIEHDPDAFDETRYQTVYAQNPGAVAAPTAGLHFDDSIFARLDAKGVERATLTLHVGAGTFQPVRVENIAEHKMHSEWYQLPQSLVDRIAATRARGNRVIAVGTTSMRALEAAARDADAAGKPLAATSAETDIFITPGYKFRVVDRLVTNFHLPKSTLLMLVSAFAGIETIRAAYRHAIDGRYRFFSYGDAMLLTRSEDALNA.

It belongs to the QueA family. As to quaternary structure, monomer.

The protein resides in the cytoplasm. The catalysed reaction is 7-aminomethyl-7-carbaguanosine(34) in tRNA + S-adenosyl-L-methionine = epoxyqueuosine(34) in tRNA + adenine + L-methionine + 2 H(+). It functions in the pathway tRNA modification; tRNA-queuosine biosynthesis. In terms of biological role, transfers and isomerizes the ribose moiety from AdoMet to the 7-aminomethyl group of 7-deazaguanine (preQ1-tRNA) to give epoxyqueuosine (oQ-tRNA). The polypeptide is S-adenosylmethionine:tRNA ribosyltransferase-isomerase (Paraburkholderia phymatum (strain DSM 17167 / CIP 108236 / LMG 21445 / STM815) (Burkholderia phymatum)).